The following is a 215-amino-acid chain: 3-isopropylmalate dehydratase small subunit (215 aa).

This sequence belongs to the LeuD family. LeuD type 1 subfamily. Heterodimer of LeuC and LeuD.

The enzyme catalyses (2R,3S)-3-isopropylmalate = (2S)-2-isopropylmalate. The protein operates within amino-acid biosynthesis; L-leucine biosynthesis; L-leucine from 3-methyl-2-oxobutanoate: step 2/4. Functionally, catalyzes the isomerization between 2-isopropylmalate and 3-isopropylmalate, via the formation of 2-isopropylmaleate. This Xylella fastidiosa (strain M23) protein is 3-isopropylmalate dehydratase small subunit.